Reading from the N-terminus, the 206-residue chain is uncharacterized protein (206 aa).

The helical transmembrane segment at 21–43 (VPINITMSICALTALLKSYSITG) threads the bilayer.

It localises to the membrane. This is an uncharacterized protein from Acanthamoeba polyphaga (Amoeba).